Consider the following 46-residue polypeptide: Protein PsbN (46 aa).

Residues Val10–Phe30 form a helical membrane-spanning segment.

Belongs to the PsbN family.

It is found in the cellular thylakoid membrane. Functionally, may play a role in photosystem I and II biogenesis. This Synechococcus sp. (strain RCC307) protein is Protein PsbN.